Consider the following 453-residue polypeptide: Chromosomal replication initiator protein DnaA (453 aa).

A domain I, interacts with DnaA modulators region spans residues 1 to 74 (MKEKQFWNRI…GFEIYDAEIT (74 aa)). The domain II stretch occupies residues 74-113 (TPHYIFTKPQDTTSSQVEEATNLTLYDYSPKLVSIPYSDT). The domain III, AAA+ region stretch occupies residues 114-331 (GLKEKYTFDN…GAINDITLIA (218 aa)). 4 residues coordinate ATP: glycine 158, glycine 160, lysine 161, and threonine 162. Residues 332–453 (RVKKIKDITI…EIESIKKKIK (122 aa)) are domain IV, binds dsDNA.

This sequence belongs to the DnaA family. In terms of assembly, oligomerizes as a right-handed, spiral filament on DNA at oriC.

It localises to the cytoplasm. In terms of biological role, plays an essential role in the initiation and regulation of chromosomal replication. ATP-DnaA binds to the origin of replication (oriC) to initiate formation of the DNA replication initiation complex once per cell cycle. Binds the DnaA box (a 9 base pair repeat at the origin) and separates the double-stranded (ds)DNA. Forms a right-handed helical filament on oriC DNA; dsDNA binds to the exterior of the filament while single-stranded (ss)DNA is stabiized in the filament's interior. The ATP-DnaA-oriC complex binds and stabilizes one strand of the AT-rich DNA unwinding element (DUE), permitting loading of DNA polymerase. After initiation quickly degrades to an ADP-DnaA complex that is not apt for DNA replication. Binds acidic phospholipids. The polypeptide is Chromosomal replication initiator protein DnaA (Streptococcus pneumoniae (strain Taiwan19F-14)).